Consider the following 536-residue polypeptide: Inactive phospholipase D5 (536 aa).

Residues 69–89 (IVIFALVCCFAILVALIFSAV) form a helical membrane-spanning segment. N-linked (GlcNAc...) asparagine glycosylation occurs at Asn121. The PLD phosphodiesterase 1 domain occupies 215–242 (NKGRLQSSFWIVDKQHVYIGSAGLDWQS). Asn302 carries N-linked (GlcNAc...) asparagine glycosylation. Residues 434–460 (FPRLNRNKYMVTDGAAYIGNFDWVGND) form the PLD phosphodiesterase 2 domain.

It belongs to the phospholipase D family.

The protein resides in the membrane. This Homo sapiens (Human) protein is Inactive phospholipase D5 (PLD5).